Consider the following 293-residue polypeptide: ATP phosphoribosyltransferase (293 aa).

It belongs to the ATP phosphoribosyltransferase family. Long subfamily. It depends on Mg(2+) as a cofactor.

It is found in the cytoplasm. It carries out the reaction 1-(5-phospho-beta-D-ribosyl)-ATP + diphosphate = 5-phospho-alpha-D-ribose 1-diphosphate + ATP. The protein operates within amino-acid biosynthesis; L-histidine biosynthesis; L-histidine from 5-phospho-alpha-D-ribose 1-diphosphate: step 1/9. Feedback inhibited by histidine. Its function is as follows. Catalyzes the condensation of ATP and 5-phosphoribose 1-diphosphate to form N'-(5'-phosphoribosyl)-ATP (PR-ATP). Has a crucial role in the pathway because the rate of histidine biosynthesis seems to be controlled primarily by regulation of HisG enzymatic activity. This Nitratidesulfovibrio vulgaris (strain DSM 19637 / Miyazaki F) (Desulfovibrio vulgaris) protein is ATP phosphoribosyltransferase.